The following is a 1390-amino-acid chain: Nuclear pore complex protein 14 (1390 aa).

2 stretches are compositionally biased toward polar residues: residues 434 to 455 (SQKP…STVF) and 464 to 521 (LKSS…STPK). 3 disordered regions span residues 434–530 (SQKP…KISD), 851–874 (PSSS…TQAD), and 985–1118 (QEIE…SKAA). Residues 851-864 (PSSSLFSASPSTPS) show a composition bias toward low complexity. Residues 986–1033 (EIEKASSKVETLNKTEEVKDEKSENEVTPDLKSEEPKSLETKVKEEPK) show a composition bias toward basic and acidic residues. The span at 1051-1071 (KTPSFSFNSTTTPKSTSSTSS) shows a compositional bias: low complexity. Residues 1073 to 1074 (FG) form repeat 1. The segment at 1073-1373 (FGGGLKTQTP…TPAPTSSVFG (301 aa)) is 17 X 2 AA repeats of F-G. Residues 1078–1090 (KTQTPSSSNSTNI) show a composition bias toward polar residues. Residues 1091 to 1092 (FG) form repeat 2. Positions 1095 to 1109 (TTTTATPTPASNTSS) are enriched in low complexity. A run of 6 repeats spans residues 1111–1112 (FG), 1122–1123 (FG), 1125–1126 (FG), 1163–1164 (FG), 1166–1167 (FG), and 1178–1179 (FG). Residues 1183–1280 (TAPTVPNVDD…QASAPATGTS (98 aa)) form a disordered region. Residues 1201 to 1210 (NGGGSGGFMS) show a composition bias toward gly residues. Low complexity predominate over residues 1231–1243 (TSTGTSASSSSWL). Copy 9 of the repeat occupies 1244–1245 (FG). The segment covering 1264–1280 (TAGSSAQQASAPATGTS) has biased composition (low complexity). A run of 8 repeats spans residues 1283–1284 (FG), 1289–1290 (FG), 1295–1296 (FG), 1300–1301 (FG), 1315–1316 (FG), 1344–1345 (FG), 1357–1358 (FG), and 1372–1373 (FG). Positions 1342-1371 (SLFGGGATPQTNTSIFGGGANTTPAPTSSV) are enriched in polar residues. The tract at residues 1342–1390 (SLFGGGATPQTNTSIFGGGANTTPAPTSSVFGGGASANANKPTSFTSWR) is disordered. The segment covering 1378 to 1390 (ANANKPTSFTSWR) has biased composition (polar residues).

In terms of assembly, interacts with caspase ced-3 (via propeptide); the interaction tethers ced-3 to the nuclear membrane and prevents its autoprocessing in absence of ced-4.

The protein localises to the nucleus. The protein resides in the nuclear pore complex. Its subcellular location is the nucleus membrane. Functionally, may serve as a docking site in the receptor-mediated import of substrates across the nuclear pore complex. Plays a role in apoptosis by tethering caspase ced-3 to the nuclear membrane preventing its autoprocessing in absence of ced-4. The polypeptide is Nuclear pore complex protein 14 (Caenorhabditis elegans).